The chain runs to 406 residues: Synaptic vesicle membrane protein VAT-1 homolog (406 aa).

Residues 1-57 (MSAEREAAEAATVAAATEAGAETGTGAGEGAPSQPPTVEVASDPQPPPAPEASASAS) are disordered. Ser-2 is subject to N-acetylserine. Ser-2 carries the post-translational modification Phosphoserine. The segment covering 9–22 (EAATVAAATEAGAE) has biased composition (low complexity). Ser-33 and Ser-42 each carry phosphoserine.

It belongs to the zinc-containing alcohol dehydrogenase family. Quinone oxidoreductase subfamily.

It localises to the cytoplasm. Its subcellular location is the mitochondrion outer membrane. Functionally, plays a part in calcium-regulated keratinocyte activation in epidermal repair mechanisms. Has no effect on cell proliferation. Possesses ATPase activity. Negatively regulates mitochondrial fusion in cooperation with mitofusin proteins (MFN1-2). The chain is Synaptic vesicle membrane protein VAT-1 homolog (Vat1) from Mus musculus (Mouse).